Reading from the N-terminus, the 1087-residue chain is Fanconi-associated nuclease 1 homolog (1087 aa).

Disordered stretches follow at residues 1 to 79, 104 to 154, 169 to 202, 459 to 486, 816 to 835, and 842 to 871; these read MKSN…TPIK, FQKA…PNNL, EFLL…NNIT, TQNS…NNNI, ITSD…EKEN, and SVKK…EEEI. Positions 41 to 79 are enriched in low complexity; sequence TTTPPKTPTQPIRFTQNNNKENDKSNNNNNNNNTITPIK. A compositionally biased stretch (polar residues) spans 104 to 115; it reads FQKASTPSSPQI. 3 stretches are compositionally biased toward low complexity: residues 118-154, 182-202, and 467-485; these read KLPQ…PNNL, NTTT…NNIT, and NNNN…NNNN. Coiled coils occupy residues 419 to 490 and 830 to 874; these read WKSK…KEYD and KIEK…IIEI. A compositionally biased stretch (acidic residues) spans 848–871; that stretch reads EQEEEEEEEEEGQGQEEEEEEEEI. Residues Glu-899, Asp-1023, Glu-1051, and Val-1052 each coordinate Mn(2+). A VRR-NUC domain is found at 961-1083; sequence DDLLILLNQS…GCDVEVCLVK (123 aa).

Belongs to the FAN1 family. Mn(2+) serves as cofactor. It depends on Mg(2+) as a cofactor.

It catalyses the reaction Hydrolytically removes 5'-nucleotides successively from the 3'-hydroxy termini of 3'-hydroxy-terminated oligonucleotides.. Functionally, nuclease required for the repair of DNA interstrand cross-links (ICL). Acts as a 5'-3' exonuclease that anchors at a cut end of DNA and cleaves DNA successively at every third nucleotide, allowing to excise an ICL from one strand through flanking incisions. The chain is Fanconi-associated nuclease 1 homolog (mtmr15) from Dictyostelium discoideum (Social amoeba).